Consider the following 167-residue polypeptide: Lipoprotein signal peptidase (167 aa).

Helical transmembrane passes span 8–28, 46–66, 70–90, and 101–121; these read TFLTSFLLVSLDWVSKLVVLL, WGHFSFLIVPSFNEGAAFGLF, KIPLLIFRVFVILCLFLFLGI, and IALTLILAGALGNVGDILFHG. Active-site residues include Asp125 and Asp143. The chain crosses the membrane as a helical span at residues 139–159; it reads FNLADAFISLGTLLLVGHLYF.

Belongs to the peptidase A8 family.

The protein localises to the cell inner membrane. It carries out the reaction Release of signal peptides from bacterial membrane prolipoproteins. Hydrolyzes -Xaa-Yaa-Zaa-|-(S,diacylglyceryl)Cys-, in which Xaa is hydrophobic (preferably Leu), and Yaa (Ala or Ser) and Zaa (Gly or Ala) have small, neutral side chains.. Its pathway is protein modification; lipoprotein biosynthesis (signal peptide cleavage). Functionally, this protein specifically catalyzes the removal of signal peptides from prolipoproteins. The polypeptide is Lipoprotein signal peptidase (Chlamydia muridarum (strain MoPn / Nigg)).